A 151-amino-acid polypeptide reads, in one-letter code: Large ribosomal subunit protein bL9 (151 aa).

The protein belongs to the bacterial ribosomal protein bL9 family.

Its function is as follows. Binds to the 23S rRNA. This chain is Large ribosomal subunit protein bL9, found in Bordetella petrii (strain ATCC BAA-461 / DSM 12804 / CCUG 43448).